The primary structure comprises 83 residues: Small ribosomal subunit protein bS16 (83 aa).

It belongs to the bacterial ribosomal protein bS16 family.

The sequence is that of Small ribosomal subunit protein bS16 from Shewanella baltica (strain OS223).